A 136-amino-acid polypeptide reads, in one-letter code: MSNVPHKSSLPEGIRPGTVLRIRGLVPPNASRFHVNLLCGEEQGSDAALHFNPRLDTSEVVFNSKEQGSWGREERGPGVPFQRGQPFEVLIIASDDGFKAVVGDAQYHHFRHRLPLARVRLVEVGGDVQLDSVRIF.

Residues 6 to 136 (HKSSLPEGIR…DVQLDSVRIF (131 aa)) form the Galectin domain. 70-76 (WGREERG) lines the a beta-D-galactoside pocket.

Monomer. As to expression, mainly expressed in stratified squamous epithelium.

The protein localises to the cytoplasm. The protein resides in the nucleus. Its subcellular location is the secreted. Could be involved in cell-cell and/or cell-matrix interactions necessary for normal growth control. Pro-apoptotic protein that functions intracellularly upstream of JNK activation and cytochrome c release. This chain is Galectin-7 (LGALS7), found in Homo sapiens (Human).